A 1004-amino-acid polypeptide reads, in one-letter code: Sodium/potassium-transporting ATPase subunit alpha-B (1004 aa).

Transmembrane regions (helical) follow at residues 76-96 and 110-126; these read LFGG…LAYG and NLYL…VTGI. Residues 197–216 form a disordered region; it reads SSLTGESEPQARSPEFTNDN. The next 2 helical transmembrane spans lie at 272-294 and 301-329; these read FIHI…AFVL and AVVF…TLTA. The active-site 4-aspartylphosphate intermediate is Asp-357. Residue Lys-489 participates in ATP binding. The Mg(2+) site is built by Asp-698 and Asp-702. 4 helical membrane-spanning segments follow: residues 768–791, 828–855, 897–918, and 934–959; these read ISPF…ILCI, ERLI…VIMA, SSCH…LIIS, and ILNF…DKGL.

The protein belongs to the cation transport ATPase (P-type) (TC 3.A.3) family. Type IIC subfamily. The sodium/potassium-transporting ATPase is composed of a catalytic alpha subunit, an auxiliary non-catalytic beta subunit and an additional regulatory subunit.

Its subcellular location is the cell membrane. The catalysed reaction is K(+)(out) + Na(+)(in) + ATP + H2O = K(+)(in) + Na(+)(out) + ADP + phosphate + H(+). This is the catalytic component of the active enzyme, which catalyzes the hydrolysis of ATP coupled with the exchange of sodium and potassium ions across the plasma membrane. This action creates the electrochemical gradient of sodium and potassium ions, providing the energy for active transport of various nutrients. This chain is Sodium/potassium-transporting ATPase subunit alpha-B, found in Artemia franciscana (Brine shrimp).